The chain runs to 156 residues: Cell division protein SepF (156 aa).

It belongs to the SepF family. In terms of assembly, homodimer. Interacts with FtsZ.

Its subcellular location is the cytoplasm. Its function is as follows. Cell division protein that is part of the divisome complex and is recruited early to the Z-ring. Probably stimulates Z-ring formation, perhaps through the cross-linking of FtsZ protofilaments. Its function overlaps with FtsA. This is Cell division protein SepF from Bacillus cytotoxicus (strain DSM 22905 / CIP 110041 / 391-98 / NVH 391-98).